The following is a 2351-amino-acid chain: Protein FAM186A (2351 aa).

The stretch at E296–L340 forms a coiled coil. Disordered regions lie at residues E412–R460, E470–K489, E505–G538, Q593–S667, S809–S838, L868–E976, G1805–P1837, and F1888–G1907. A compositionally biased stretch (basic and acidic residues) spans D433 to F446. Positions S472 to K484 are enriched in polar residues. Residues M506 to A520 are compositionally biased toward basic and acidic residues. The span at L527–G538 shows a compositional bias: polar residues. Over residues G603–I612 the composition is skewed to basic residues. Basic and acidic residues-rich tracts occupy residues S619–K632 and Q812–Q823. Residues Q812–N860 are a coiled coil. The segment covering E824–S838 has biased composition (polar residues). 3 stretches are compositionally biased toward basic and acidic residues: residues A901–Q912, L939–H955, and K964–E976. Pro residues predominate over residues P1816–G1835. The span at A1894–G1907 shows a compositional bias: polar residues.

The protein belongs to the FAM186 family.

The chain is Protein FAM186A (FAM186A) from Homo sapiens (Human).